A 52-amino-acid chain; its full sequence is MAVPKKRTSISKKHIRRNFWKRKGYWAAVKAFSLAKSISTGYSKGFFVRQKK.

It belongs to the bacterial ribosomal protein bL32 family.

It localises to the plastid. The protein resides in the chloroplast. The sequence is that of Large ribosomal subunit protein bL32c from Nymphaea alba (White water-lily).